A 562-amino-acid chain; its full sequence is Apical membrane antigen 1 (562 aa).

Positions 1–21 (MNKIYCILFLSAQCLVHMGKC) are cleaved as a signal peptide. Residues 22–484 (EPNQKPSRLT…QYAQGESKNQ (463 aa)) lie on the Extracellular side of the membrane. N-linked (GlcNAc...) asparagine glycosylation is found at N84 and N176. Intrachain disulfides connect C94/C247, C162/C192, C208/C220, C265/C363, C282/C354, C388/C444, C432/C449, and C434/C451. Residue N226 is glycosylated (N-linked (GlcNAc...) asparagine). N405 and N441 each carry an N-linked (GlcNAc...) asparagine glycan. A helical membrane pass occupies residues 485–507 (MLLIIIGITGGVCVVALASMFYF). Residues 508 to 562 (RKKAHNDKYDKMEQADGYGKPTTRKDEMLDPEASFWGEEKRASHTTPVLMEKPYY) lie on the Cytoplasmic side of the membrane. Residues 519-543 (MEQADGYGKPTTRKDEMLDPEASFW) are disordered.

The protein belongs to the apicomplexan parasites AMA1 family.

The protein localises to the membrane. In terms of biological role, involved in parasite invasion of erythrocytes. This is Apical membrane antigen 1 (AMA-1) from Plasmodium fragile.